We begin with the raw amino-acid sequence, 269 residues long: Voltage-gated hydrogen channel 1 (269 aa).

Over 1-96 the chain is Cytoplasmic; sequence MTSHDPKAVT…RLRKLFSSHR (96 aa). T29 is subject to Phosphothreonine. The segment at 46–79 is disordered; it reads ENEEEEEEPAPTSAEGEGNAEGPDAEAGSASTPR. S93 carries the phosphoserine modification. Residues 97–117 traverse the membrane as a helical segment; sequence FQVIIICLVVLDALLVLAELL. Residues 118-134 lie on the Extracellular side of the membrane; sequence LDLKIIEPDEQDYAVTA. Residues 135 to 157 form a helical membrane-spanning segment; the sequence is FHYMSFAILVFFMLEIFFKIFVF. At 158–165 the chain is on the cytoplasmic side; sequence RLEFFHHK. Residues 166–186 traverse the membrane as a helical segment; that stretch reads FEILDAFVVVVSFVLDLVLLF. Over 187-193 the chain is Extracellular; it reads KSHHFEA. A helical membrane pass occupies residues 194 to 214; sequence LGLLILLRLWRVARIINGIII. Over 215 to 269 the chain is Cytoplasmic; that stretch reads SVKTRSERQILRLKQINIQLATKIQHLEFSCSEKEQEIERLNKLLKQNGLLGDVN. The stretch at 221 to 261 forms a coiled coil; the sequence is ERQILRLKQINIQLATKIQHLEFSCSEKEQEIERLNKLLKQ.

Belongs to the voltage-gated proton channel (VPC) (TC 1.A.51) family. As to quaternary structure, homodimer; each protomer forms its own proton conduction pathway. Phosphorylated in vitro by PRKCD. Phosphorylation may enhance channel gating. Enriched in immune tissues, such as bone marrow, macrophages and spleen.

Its subcellular location is the cell membrane. The protein localises to the apical cell membrane. The protein resides in the cytoplasmic vesicle. It is found in the phagosome membrane. It localises to the cell projection. Its subcellular location is the cilium. The protein localises to the flagellum membrane. The enzyme catalyses H(+)(in) = H(+)(out). With respect to regulation, the dimers display cooperative channel gating. The channel activity is inhibited by zinc ions. Voltage-gated proton-selective channel that conducts outward proton currents in response to intracellular acidification. Lacks a canonical ion-channel pore domain and mediates proton permeability via its voltage sensor domain. Provides for proton efflux that compensates for electron charge generated by NADPH oxidase activity either in the extracellular or phagosomal compartments, thus enabling the production of high levels of bactericidal reactive oxygen species during the respiratory burst. Opens when the pH of airway surface liquid exceeds 7 and contributes to respiratory epithelial acid secretion to maintain pH in the mucosa. The sequence is that of Voltage-gated hydrogen channel 1 from Mus musculus (Mouse).